We begin with the raw amino-acid sequence, 697 residues long: Sodium-dependent phosphate transport protein 2B (697 aa).

The tract at residues 1 to 45 (MAPWPELENAQPNPGKFIEGASGPQSSIPAKDKEASKTNDNGTPV) is disordered. The Cytoplasmic segment spans residues 1–91 (MAPWPELENA…WSERDTKGKT (91 aa)). Residues 92 to 112 (LCIFQGVGKFILLLGFLYLFV) traverse the membrane as a helical segment. At 113–136 (CSLDVLSSAFQLVGGKVAGQFFSN) the chain is on the extracellular side. A helical transmembrane segment spans residues 137–157 (NSIMSNPVAGLVIGVLVTVMV). Topologically, residues 158–213 (QSSSTSSSIIVSMVASSLLTVRAAIPIIMGANIGTSITNTIVALMQAGDRNEFRRA) are cytoplasmic. The chain crosses the membrane as a helical span at residues 214-234 (FAGATVHDFFNWLSVFVLLPL). Residues 235–363 (EAATHYLEIL…FVNFSLPDLA (129 aa)) are Extracellular-facing. N295, N308, N321, and N356 each carry an N-linked (GlcNAc...) asparagine glycan. An intrachain disulfide couples C303 to C350. Residues 364-384 (VGIILLTVSLVVLCGCLIMIV) form a helical membrane-spanning segment. Residues 385–408 (KLLGSVLRGQVATVIKKTLNTDFP) lie on the Cytoplasmic side of the membrane. Residues 409-429 (FPFAWLTGYLAILVGAGMTFI) form a helical membrane-spanning segment. Residues 430-486 (VQSSSVFTSAMTPLIGIGVISIERAYPLTLGSNIGTTTTAILAALASPGNTLRSSLQ) lie on the Extracellular side of the membrane. The helical transmembrane segment at 487-507 (IALCHFFFNISGILLWYPIPF) threads the bilayer. Residues 508-526 (TRLPIRLAKGLGNISAKYR) are Cytoplasmic-facing. A helical membrane pass occupies residues 527–547 (WFAVFYLIFFFFVTPLTVFGL). Over 548–551 (SLAG) the chain is Extracellular. Residues 552-572 (WPVLVGVGVPIILLLLLVLCL) traverse the membrane as a helical segment. Over 573-696 (RMLQFRCPRI…SMKALSNTTV (124 aa)) the chain is Cytoplasmic.

The protein belongs to the SLC34A transporter family. As to expression, highly abundant in the ileum of small intestine, whereas it is almost absent in the duodenum and in the jejunum.

Its subcellular location is the apical cell membrane. It catalyses the reaction 3 Na(+)(out) + phosphate(out) = 3 Na(+)(in) + phosphate(in). Its function is as follows. Involved in actively transporting phosphate into cells via Na(+) cotransport. This is Sodium-dependent phosphate transport protein 2B (Slc34a2) from Mus musculus (Mouse).